The primary structure comprises 542 residues: Nuclear hormone receptor family member nhr-35 (542 aa).

Residues 74 to 149 (NSICHICSDV…SGMRDDQVQS (76 aa)) constitute a DNA-binding region (nuclear receptor). 2 NR C4-type zinc fingers span residues 77-97 (CHIC…CNGC) and 113-137 (CRFE…FMKC). An NR LBD domain is found at 186-438 (EYDQLLESLL…VLMEELILAE (253 aa)). The interval 445–487 (RQDQTPCSIMNDTPSGSQDMCSPCPEDLLRTSTSSNSPTNSSL) is disordered. Positions 448-464 (QTPCSIMNDTPSGSQDM) are enriched in polar residues. Residues 475–487 (TSTSSNSPTNSSL) show a composition bias toward low complexity.

The protein belongs to the nuclear hormone receptor family.

The protein localises to the nucleus. Orphan nuclear receptor. This Caenorhabditis elegans protein is Nuclear hormone receptor family member nhr-35 (nhr-35).